Here is a 476-residue protein sequence, read N- to C-terminus: Ubiquitin-conjugating enzyme E2 variant 3 (476 aa).

One can recognise a UEV domain in the interval glutamate 2 to serine 145. Glycine 185–glutamate 213 serves as a coordination point for NAD(+).

The protein in the N-terminal section; belongs to the ubiquitin-conjugating enzyme family. UEV subfamily. It in the C-terminal section; belongs to the LDH/MDH superfamily. In terms of assembly, homodimer.

Its function is as follows. Possible negative regulator of polyubiquitination. The sequence is that of Ubiquitin-conjugating enzyme E2 variant 3 (uevld) from Xenopus tropicalis (Western clawed frog).